Here is a 404-residue protein sequence, read N- to C-terminus: uncharacterized protein (404 aa).

This is an uncharacterized protein from Mycoplasma genitalium (strain ATCC 33530 / DSM 19775 / NCTC 10195 / G37) (Mycoplasmoides genitalium).